The following is a 363-amino-acid chain: Transcription factor IIIA (363 aa).

9 C2H2-type zinc fingers span residues 38–62, 68–92, 98–123, 130–154, 160–184, 187–211, 215–237, 244–269, and 275–299; these read FICS…LCKH, FVCD…ILIH, FVCA…ERKH, YVCN…QCQH, FRCT…GKVH, YLCQ…REAH, VTCT…MKTH, YRCP…LSFH, and FVCE…SVVH. A disordered region spans residues 301 to 363; it reads PDKKRMKLKV…LAPAALLTVH (63 aa). Over residues 338 to 350 the composition is skewed to low complexity; the sequence is SLPNSTESSSSPE.

It localises to the nucleus. Functionally, involved in ribosomal large subunit biogenesis. Binds the approximately 50 base pairs internal control region (ICR) of 5S ribosomal RNA genes. It is required for their RNA polymerase III-dependent transcription and may also maintain the transcription of other genes. Also binds the transcribed 5S RNA's. The polypeptide is Transcription factor IIIA (Gtf3a) (Rattus norvegicus (Rat)).